A 526-amino-acid polypeptide reads, in one-letter code: 3-hydroxy-3-methylglutaryl-coenzyme A reductase 2 (526 aa).

Residues E193, K325, and D401 each act as charge relay system in the active site. The Proton donor role is filled by H499. The segment at 503 to 526 is disordered; that stretch reads NRKTEAPAPQADTISMTHNLPHSD. The span at 514 to 526 shows a compositional bias: polar residues; that stretch reads DTISMTHNLPHSD.

This sequence belongs to the HMG-CoA reductase family.

The enzyme catalyses (R)-mevalonate + 2 NADP(+) + CoA = (3S)-3-hydroxy-3-methylglutaryl-CoA + 2 NADPH + 2 H(+). It participates in metabolic intermediate biosynthesis; (R)-mevalonate biosynthesis; (R)-mevalonate from acetyl-CoA: step 3/3. Functionally, this transmembrane glycoprotein is involved in the control of cholesterol biosynthesis. It is the rate-limiting enzyme of the sterol biosynthesis. This Dictyostelium discoideum (Social amoeba) protein is 3-hydroxy-3-methylglutaryl-coenzyme A reductase 2 (hmgB).